An 89-amino-acid polypeptide reads, in one-letter code: Small ribosomal subunit protein uS15 (89 aa).

It belongs to the universal ribosomal protein uS15 family. Part of the 30S ribosomal subunit. Forms a bridge to the 50S subunit in the 70S ribosome, contacting the 23S rRNA.

One of the primary rRNA binding proteins, it binds directly to 16S rRNA where it helps nucleate assembly of the platform of the 30S subunit by binding and bridging several RNA helices of the 16S rRNA. Functionally, forms an intersubunit bridge (bridge B4) with the 23S rRNA of the 50S subunit in the ribosome. This is Small ribosomal subunit protein uS15 from Chromobacterium violaceum (strain ATCC 12472 / DSM 30191 / JCM 1249 / CCUG 213 / NBRC 12614 / NCIMB 9131 / NCTC 9757 / MK).